Consider the following 202-residue polypeptide: Twist-related protein 1 (202 aa).

Residues 1–18 (MMQDVSSSPVSPADDSLS) show a composition bias toward low complexity. Positions 1-105 (MMQDVSSSPV…GGGSPQSYEE (105 aa)) are disordered. Positions 34 to 43 (RGGRKRRSSR) are enriched in basic residues. Gly residues-rich tracts occupy residues 46–65 (AGGG…GGDE) and 80–99 (GCGG…GGGS). Positions 108 to 159 (TQRVMANVRERQRTQSLNEAFAALRKIIPTLPSDKLSKIQTLKLAARYIDFL) constitute a bHLH domain. The sufficient for transactivation activity stretch occupies residues 161-191 (QVLQSDELDSKMASCSYVAHERLSYAFSVWR).

As to quaternary structure, efficient DNA binding requires dimerization with another bHLH protein. Homodimer or heterodimer with E proteins such as TCF3. ID1 binds preferentially to TCF3 but does not interact efficiently with TWIST1 so ID1 levels control the amount of TCF3 available to dimerize with TWIST1 and thus determine the type of dimer formed. In terms of tissue distribution, subset of mesodermal cells.

It localises to the nucleus. Its function is as follows. Acts as a transcriptional regulator. Inhibits myogenesis by sequestrating E proteins, inhibiting trans-activation by MEF2, and inhibiting DNA-binding by MYOD1 through physical interaction. This interaction probably involves the basic domains of both proteins. Also represses expression of pro-inflammatory cytokines such as TNFA and IL1B. Regulates cranial suture patterning and fusion. Activates transcription as a heterodimer with E proteins. Regulates gene expression differentially, depending on dimer composition. Homodimers induce expression of FGFR2 and POSTN while heterodimers repress FGFR2 and POSTN expression and induce THBS1 expression. Heterodimerization is also required for osteoblast differentiation. Represses the activity of the circadian transcriptional activator: NPAS2-BMAL1 heterodimer. This Homo sapiens (Human) protein is Twist-related protein 1 (TWIST1).